A 327-amino-acid chain; its full sequence is Lactosylceramide 4-alpha-galactosyltransferase (327 aa).

A DXD motif motif is present at residues 166–168 (DTD).

It belongs to the glycosyltransferase 32 family.

It is found in the golgi apparatus membrane. It carries out the reaction a beta-D-Gal-(1-&gt;4)-beta-D-Glc-(1&lt;-&gt;1)-Cer(d18:1(4E)) + UDP-alpha-D-galactose = a globoside Gb3Cer (d18:1(4E)) + UDP + H(+). The enzyme catalyses a beta-D-Gal-(1&lt;-&gt;1')-ceramide + UDP-alpha-D-galactose = alpha-D-Gal-(1-&gt;4)-beta-D-Gal-(1&lt;-&gt;1')-Cer + UDP + H(+). Its pathway is glycolipid biosynthesis. Its function is as follows. Catalyzes the transfer of galactose from UDP-alpha-D-galactose to lactosylceramide/beta-D-galactosyl-(1-&gt;4)-beta-D-glucosyl-(1&lt;-&gt;1)-ceramide(d18:1(4E)) to produce globotriaosylceramide/globoside Gb3Cer (d18:1(4E)). Also able to transfer galactose to galactosylceramide/beta-D-Gal-(1&lt;-&gt;1')-Cer. Globoside Gb3Cer is a glycosphingolipid of the globo serie, one of the major types of neutral root structures of glycosphingolipids, that constitute a significant portion of mammalian cell membranes. This is Lactosylceramide 4-alpha-galactosyltransferase (A4GALT) from Gorilla gorilla gorilla (Western lowland gorilla).